Consider the following 688-residue polypeptide: Zinc finger CCCH domain-containing protein 22 (688 aa).

The segment at 62–123 (ALLPPPPPPS…QPFSRSNGSV (62 aa)) is disordered. The segment covering 101–117 (PLSASSPSSWAQAQPFS) has biased composition (low complexity). The C3H1-type zinc-finger motif lies at 233-260 (GFGWKPCLYYARGFCKNGSSCRFVHGDD). The RRM domain maps to 366–442 (RQIYLTFPAD…RVLVKPYKEK (77 aa)). A coiled-coil region spans residues 487 to 522 (TNEMMLRRKLEEQQQAAELQQAIELHSRRLMDLQLL). The tract at residues 552–624 (LATTMVESPP…PTKSSVSAHQ (73 aa)) is disordered. A compositionally biased stretch (basic and acidic residues) spans 574–589 (TEERKMVNGGGDKEES). Residues 613-624 (ASPTKSSVSAHQ) are compositionally biased toward polar residues.

This is Zinc finger CCCH domain-containing protein 22 from Oryza sativa subsp. japonica (Rice).